The sequence spans 369 residues: Maltose/maltodextrin import ATP-binding protein MalK (369 aa).

The ABC transporter domain occupies 4 to 234 (VTLRNVCKSY…PKNRFVAGFI (231 aa)). 36-43 (GPSGCGKS) provides a ligand contact to ATP.

Belongs to the ABC transporter superfamily. Maltooligosaccharide importer (TC 3.A.1.1.1) family. In terms of assembly, the complex is composed of two ATP-binding proteins (MalK), two transmembrane proteins (MalG and MalK) and a solute-binding protein (MalE).

The protein resides in the cell inner membrane. It catalyses the reaction D-maltose(out) + ATP + H2O = D-maltose(in) + ADP + phosphate + H(+). Functionally, part of the ABC transporter complex MalEFGK involved in maltose/maltodextrin import. Responsible for energy coupling to the transport system. The protein is Maltose/maltodextrin import ATP-binding protein MalK of Aliivibrio fischeri (strain ATCC 700601 / ES114) (Vibrio fischeri).